Consider the following 311-residue polypeptide: UDP-N-acetylenolpyruvoylglucosamine reductase (311 aa).

Positions 34–198 (MGGAADLFIT…LEGTFRLQKG (165 aa)) constitute an FAD-binding PCMH-type domain. Arg177 is an active-site residue. Ser227 (proton donor) is an active-site residue. Glu297 is a catalytic residue.

The protein belongs to the MurB family. FAD is required as a cofactor.

The protein resides in the cytoplasm. It carries out the reaction UDP-N-acetyl-alpha-D-muramate + NADP(+) = UDP-N-acetyl-3-O-(1-carboxyvinyl)-alpha-D-glucosamine + NADPH + H(+). It functions in the pathway cell wall biogenesis; peptidoglycan biosynthesis. Its function is as follows. Cell wall formation. The chain is UDP-N-acetylenolpyruvoylglucosamine reductase from Shouchella clausii (strain KSM-K16) (Alkalihalobacillus clausii).